A 285-amino-acid chain; its full sequence is Methionine aminopeptidase 2 (285 aa).

Residue histidine 114 coordinates substrate. A divalent metal cation is bound by residues aspartate 131, aspartate 142, and histidine 205. Substrate is bound at residue histidine 212. 2 residues coordinate a divalent metal cation: glutamate 238 and glutamate 269.

Monomer. It depends on Co(2+) as a cofactor. The cofactor is Zn(2+). Requires Mn(2+) as cofactor. Fe(2+) is required as a cofactor.

The catalysed reaction is Release of N-terminal amino acids, preferentially methionine, from peptides and arylamides.. With respect to regulation, inhibited by bengamide derivatives and by various metalloform-selective inhibitors. Its function is as follows. Removes the N-terminal methionine from nascent proteins. The N-terminal methionine is often cleaved when the second residue in the primary sequence is small and uncharged (Met-Ala-, Cys, Gly, Pro, Ser, Thr, or Val). Requires deformylation of the N(alpha)-formylated initiator methionine before it can be hydrolyzed. The protein is Methionine aminopeptidase 2 of Mycobacterium tuberculosis (strain ATCC 25618 / H37Rv).